A 403-amino-acid polypeptide reads, in one-letter code: Nodal homolog (403 aa).

An N-terminal signal peptide occupies residues 1–18 (MAFLTAVLCFGFACMVQG). Positions 19 to 278 (VPSWLESRIP…RMPGIRRHRR (260 aa)) are excised as a propeptide. Asn-68, Asn-133, and Asn-169 each carry an N-linked (GlcNAc...) asparagine glycan. A disordered region spans residues 195–220 (AERGSGMSSAEFLDSPGDSPQYNPHH). Cystine bridges form between Cys-303–Cys-369, Cys-332–Cys-400, and Cys-336–Cys-402. Asn-341 carries N-linked (GlcNAc...) asparagine glycosylation.

It belongs to the TGF-beta family. Homodimer; disulfide-linked. Interacts with, and is inhibited by cer1 and gdf10/bmp3b.

It is found in the secreted. Functionally, cooperation and regulatory loops of multiple nodals are essential for mesendoderm patterning in early embryos. Essential for mesoderm formation and axial patterning during embryonic development. Activates the activin-like signaling pathway to induce dorsal and ventral mesoderm in animal cap ectoderm. In addition, also dorsalizes ventral marginal zone (VMZ) tissues during gastrulation. Acts in a downstream signaling cascade via cripto and cer1 to mediate cardiogenesis in embryonic mesoderm. Directs the orientation of the left-right axis by driving the left-specific gene cascade in the left lateral plate mesoderm. The chain is Nodal homolog from Xenopus tropicalis (Western clawed frog).